A 122-amino-acid polypeptide reads, in one-letter code: Large ribosomal subunit protein uL14 (122 aa).

The protein belongs to the universal ribosomal protein uL14 family. As to quaternary structure, part of the 50S ribosomal subunit. Forms a cluster with proteins L3 and L19. In the 70S ribosome, L14 and L19 interact and together make contacts with the 16S rRNA in bridges B5 and B8.

Its function is as follows. Binds to 23S rRNA. Forms part of two intersubunit bridges in the 70S ribosome. This chain is Large ribosomal subunit protein uL14, found in Wolinella succinogenes (strain ATCC 29543 / DSM 1740 / CCUG 13145 / JCM 31913 / LMG 7466 / NCTC 11488 / FDC 602W) (Vibrio succinogenes).